The primary structure comprises 643 residues: Phosphomethylpyrimidine synthase (643 aa).

Substrate contacts are provided by residues N221, M250, Y279, H315, 335 to 337 (SRG), 376 to 379 (DGLR), and E415. Zn(2+) is bound at residue H419. Y442 lines the substrate pocket. Residue H483 coordinates Zn(2+). Residues C563, C566, and C571 each coordinate [4Fe-4S] cluster.

This sequence belongs to the ThiC family. As to quaternary structure, homodimer. Requires [4Fe-4S] cluster as cofactor.

The enzyme catalyses 5-amino-1-(5-phospho-beta-D-ribosyl)imidazole + S-adenosyl-L-methionine = 4-amino-2-methyl-5-(phosphooxymethyl)pyrimidine + CO + 5'-deoxyadenosine + formate + L-methionine + 3 H(+). It participates in cofactor biosynthesis; thiamine diphosphate biosynthesis. Functionally, catalyzes the synthesis of the hydroxymethylpyrimidine phosphate (HMP-P) moiety of thiamine from aminoimidazole ribotide (AIR) in a radical S-adenosyl-L-methionine (SAM)-dependent reaction. This is Phosphomethylpyrimidine synthase from Nitrobacter hamburgensis (strain DSM 10229 / NCIMB 13809 / X14).